The sequence spans 262 residues: Small ribosomal subunit protein eS1 (262 aa).

This sequence belongs to the eukaryotic ribosomal protein eS1 family. Component of the small ribosomal subunit. Mature ribosomes consist of a small (40S) and a large (60S) subunit. The 40S subunit contains about 33 different proteins and 1 molecule of RNA (18S). The 60S subunit contains about 49 different proteins and 3 molecules of RNA (25S, 5.8S and 5S).

It localises to the cytoplasm. The chain is Small ribosomal subunit protein eS1 from Plasmodium vivax (strain Salvador I).